A 473-amino-acid polypeptide reads, in one-letter code: Hyaluronidase-2 (473 aa).

Positions 1-20 (MWTGLGPAVTLALVLVVAWA) are cleaved as a signal peptide. Cystine bridges form between Cys47–Cys343 and Cys214–Cys230. N-linked (GlcNAc...) asparagine glycosylation is found at Asn77 and Asn106. Glu138 (proton donor) is an active-site residue. N-linked (GlcNAc...) asparagine glycosylation is found at Asn340 and Asn360. The EGF-like domain maps to 364–442 (AAQYCSWAQC…YLGWGGEQCQ (79 aa)). Intrachain disulfides connect Cys368/Cys379, Cys373/Cys430, and Cys432/Cys441. Gly451 is lipidated: GPI-anchor amidated glycine. The propeptide at 452-473 (ASGAWAGSHLTGLLAVAVLAFT) is removed in mature form.

The protein belongs to the glycosyl hydrolase 56 family. Interacts with MST1R.

Its subcellular location is the cell membrane. It catalyses the reaction Random hydrolysis of (1-&gt;4)-linkages between N-acetyl-beta-D-glucosamine and D-glucuronate residues in hyaluronate.. Its function is as follows. Catalyzes hyaluronan degradation into small fragments that are endocytosed and degraded in lysosomes by HYAL1 and exoglycosidases. Essential for the breakdown of extracellular matrix hyaluronan. The protein is Hyaluronidase-2 (HYAL2) of Bos taurus (Bovine).